Consider the following 214-residue polypeptide: Probable chemoreceptor glutamine deamidase CheD (214 aa).

The protein belongs to the CheD family.

The enzyme catalyses L-glutaminyl-[protein] + H2O = L-glutamyl-[protein] + NH4(+). Functionally, probably deamidates glutamine residues to glutamate on methyl-accepting chemotaxis receptors (MCPs), playing an important role in chemotaxis. The polypeptide is Probable chemoreceptor glutamine deamidase CheD (Vibrio vulnificus (strain CMCP6)).